A 129-amino-acid polypeptide reads, in one-letter code: N16.5 matrix protein (129 aa).

Residues 1-23 (MTCTLRWTITALVLLGICHLARP) form the signal peptide. A run of 5 repeats spans residues 91 to 92 (NG), 93 to 94 (NG), 95 to 96 (NG), 97 to 98 (NG), and 99 to 100 (NG). Residues 91–100 (NGNGNGNGNG) form a 5 X 2 AA tandem repeats of N-G region.

This sequence belongs to the N16 matrix protein family. As to quaternary structure, heterooligomer; disulfide-linked. Pif97, Pif80, N16 and other proteins form a complex. Component of conchiolin, the organic matrix of nacre. Specifically expressed in mantle epithelium.

It is found in the secreted. Its subcellular location is the extracellular space. The protein resides in the extracellular matrix. Its function is as follows. May be specifically involved in the formation of the nacreous layer. This is N16.5 matrix protein from Pinctada fucata (Akoya pearl oyster).